The primary structure comprises 864 residues: Leucine--tRNA ligase (864 aa).

A 'HIGH' region motif is present at residues proline 40–histidine 51. The 'KMSKS' region signature appears at lysine 636–serine 640. ATP is bound at residue lysine 639.

Belongs to the class-I aminoacyl-tRNA synthetase family.

It localises to the cytoplasm. It catalyses the reaction tRNA(Leu) + L-leucine + ATP = L-leucyl-tRNA(Leu) + AMP + diphosphate. In Leptospira borgpetersenii serovar Hardjo-bovis (strain JB197), this protein is Leucine--tRNA ligase.